The following is a 123-amino-acid chain: Small ribosomal subunit protein uS12 (123 aa).

Asp89 bears the 3-methylthioaspartic acid mark.

This sequence belongs to the universal ribosomal protein uS12 family. Part of the 30S ribosomal subunit. Contacts proteins S8 and S17. May interact with IF1 in the 30S initiation complex.

In terms of biological role, with S4 and S5 plays an important role in translational accuracy. Interacts with and stabilizes bases of the 16S rRNA that are involved in tRNA selection in the A site and with the mRNA backbone. Located at the interface of the 30S and 50S subunits, it traverses the body of the 30S subunit contacting proteins on the other side and probably holding the rRNA structure together. The combined cluster of proteins S8, S12 and S17 appears to hold together the shoulder and platform of the 30S subunit. This is Small ribosomal subunit protein uS12 from Anaeromyxobacter sp. (strain Fw109-5).